We begin with the raw amino-acid sequence, 530 residues long: RNA-binding protein 39 (530 aa).

Positions 1–146 (MADDIDIEAM…PVREPIDNLT (146 aa)) are disordered. Ala2 bears the N-acetylalanine mark. The segment covering 14–32 (PYKKDENKLNSANGHEERS) has biased composition (basic and acidic residues). Basic residues-rich tracts occupy residues 33 to 56 (KKRK…KERK) and 64 to 95 (KKSK…RGRY). At Tyr95 the chain carries Phosphotyrosine. Phosphoserine is present on residues Ser97 and Ser100. Residue Lys111 forms a Glycyl lysine isopeptide (Lys-Gly) (interchain with G-Cter in SUMO2) linkage. Ser117 bears the Phosphoserine mark. Lys119 is covalently cross-linked (Glycyl lysine isopeptide (Lys-Gly) (interchain with G-Cter in SUMO2)). The span at 119–130 (KLSRRRSRSKSP) shows a compositional bias: basic residues. Phosphoserine is present on residues Ser121 and Ser136. The span at 131-146 (FRKDKSPVREPIDNLT) shows a compositional bias: basic and acidic residues. Thr146 is subject to Phosphothreonine. One can recognise an RRM 1 domain in the interval 153–230 (RTVFCMQLAA…VPIIVQASQA (78 aa)). Residue Lys244 forms a Glycyl lysine isopeptide (Lys-Gly) (interchain with G-Cter in SUMO2) linkage. One can recognise an RRM 2 domain in the interval 250 to 328 (MRLYVGSLHF…RPMKVGHVTE (79 aa)). Residues 291–355 (KGYGFITFSD…RTGIDLGTTG (65 aa)) are activating domain. The interaction with JUN stretch occupies residues 291–406 (KGYGFITFSD…IDLQTRLSQQ (116 aa)). Phosphoserine occurs at positions 334, 337, and 341. An interaction with ESR1 and ESR2 region spans residues 355–406 (GRLQLMARLAEGTGLQIPPAAQQALQMSGSLAFGAVAEFSFVIDLQTRLSQQ). The segment at 406-530 (QTEASALAAA…ATQLLVPSRR (125 aa)) is interaction with NCOA6. Positions 445–508 (EIKDDVIEEC…KMITAAYVPL (64 aa)) constitute an RRM 3 domain.

It belongs to the splicing factor SR family. As to quaternary structure, interacts with NCOA6 and JUN. Interacts with ESR1 and ESR2, in the presence of estradiol (E2). Interacts with RSRC1 (via Arg/Ser-rich domain). Interacts with SF3B1. Interacts with ZNF106 (via N-terminus).

The protein localises to the nucleus. RNA-binding protein that acts as a pre-mRNA splicing factor. Acts by promoting exon inclusion via regulation of exon cassette splicing. Also acts as a transcriptional coactivator for steroid nuclear receptors ESR1/ER-alpha and ESR2/ER-beta, and JUN/AP-1, independently of the pre-mRNA splicing factor activity. This is RNA-binding protein 39 (Rbm39) from Mus musculus (Mouse).